The chain runs to 277 residues: Shikimate dehydrogenase (NADP(+)) (277 aa).

Shikimate contacts are provided by residues 15 to 17 (SLS) and Thr-62. Lys-66 serves as the catalytic Proton acceptor. Asn-87 and Asp-102 together coordinate shikimate. NADP(+) is bound by residues 127–131 (GAGGA), 151–156 (NRTVDK), and Ile-219. Tyr-221 is a binding site for shikimate. Gly-242 contacts NADP(+).

Belongs to the shikimate dehydrogenase family. Homodimer.

The enzyme catalyses shikimate + NADP(+) = 3-dehydroshikimate + NADPH + H(+). It functions in the pathway metabolic intermediate biosynthesis; chorismate biosynthesis; chorismate from D-erythrose 4-phosphate and phosphoenolpyruvate: step 4/7. Involved in the biosynthesis of the chorismate, which leads to the biosynthesis of aromatic amino acids. Catalyzes the reversible NADPH linked reduction of 3-dehydroshikimate (DHSA) to yield shikimate (SA). In Bacillus cereus (strain G9842), this protein is Shikimate dehydrogenase (NADP(+)).